A 54-amino-acid chain; its full sequence is MKIFFAILLILAVCSMAIWTVNGTPFEVRCATDADCARKCPGNPPCRNGFCACT.

An N-terminal signal peptide occupies residues 1-23 (MKIFFAILLILAVCSMAIWTVNG). Cystine bridges form between Cys30-Cys46, Cys36-Cys51, and Cys40-Cys53.

The protein belongs to the short scorpion toxin superfamily. Potassium channel inhibitor family. Alpha-KTx 14 subfamily. In terms of tissue distribution, expressed by the venom gland.

The protein resides in the secreted. Potassium channels inhibitor. This Olivierus martensii (Manchurian scorpion) protein is Potassium channel toxin alpha-KTx 14.x.